The primary structure comprises 189 residues: Putative manganese efflux pump MntP (189 aa).

Helical transmembrane passes span 3-23, 41-61, 69-89, 105-125, 133-153, and 168-188; these read PISLLFLALAMSTDAFAAALG, LIFGAIETITPVIGWGIGQVA, DHWIAFTLLLVLGLHMIYNGI, FWILAVTAFATSIDALAVGVG, IVIAALAIGLATTVMVTIGVM, and IVGGIVLIIVGATILYEHLSA.

This sequence belongs to the MntP (TC 9.B.29) family.

The protein resides in the cell inner membrane. Its function is as follows. Probably functions as a manganese efflux pump. The polypeptide is Putative manganese efflux pump MntP (Pseudomonas savastanoi pv. phaseolicola (strain 1448A / Race 6) (Pseudomonas syringae pv. phaseolicola (strain 1448A / Race 6))).